Here is a 136-residue protein sequence, read N- to C-terminus: Regulator of nucleoside diphosphate kinase (136 aa).

The protein belongs to the Rnk family. Interacts with the RNA polymerase.

In terms of biological role, may act as an anti-Gre factor. The protein is Regulator of nucleoside diphosphate kinase of Escherichia coli O6:H1 (strain CFT073 / ATCC 700928 / UPEC).